The primary structure comprises 401 residues: MRIPEDVRKDIPLTQEVIYFDNTATSLTPKPVIEAMDEYYLRYRANVHRGVHRLSQMATQKYEESRKVVADFINAEFDEIAFTKNTSESLNLVALGLEHLFKKGDKIVTTPYEHHSNLLPWQRLAKKKGLKLEFIEGDDEGNLDLADAEKKIKGAKLVAVQHVSNALGVIHEVEELGKMVKEEGAIFVVDAAQSVGHMEVDVKKLKADFLAFSGHKGPMGPTGIGVLYINKEFFDVFEPPLIGGGTIEDVELCCYKLTEPPERFEAGTPNIGGAIGLAAGIKYIEKIGIDKIEKQERKLVKRTTEGLDELEIPWYGPRNLDKHAGVVSFNVPPLHPHDVASVLDEHKIMVRSGHHCALPVMKRLKINGTVRASFHVYNSLEEVETFLGVLEELVKSLRSSQ.

The residue at position 216 (Lys-216) is an N6-(pyridoxal phosphate)lysine.

This sequence belongs to the class-V pyridoxal-phosphate-dependent aminotransferase family. Csd subfamily. Pyridoxal 5'-phosphate serves as cofactor.

It catalyses the reaction (sulfur carrier)-H + L-cysteine = (sulfur carrier)-SH + L-alanine. This chain is Probable cysteine desulfurase (csd), found in Pyrococcus abyssi (strain GE5 / Orsay).